The sequence spans 599 residues: Zinc metalloproteinase dpy-31 (599 aa).

A signal peptide spans 1 to 22 (MALLKPFLSRTFSSFFATITGG). Residues 23–211 (RNLIDSIEEL…IQHGRRTKRK (189 aa)) constitute a propeptide that is removed on maturation. The Peptidase M12A domain maps to 211 to 410 (KFIRSELRRW…IRLMNVIYCS (200 aa)). An N-linked (GlcNAc...) asparagine glycan is attached at Asn251. 5 cysteine pairs are disulfide-bonded: Cys254–Cys409, Cys277–Cys298, Cys413–Cys433, Cys435–Cys444, and Cys455–Cys483. A Zn(2+)-binding site is contributed by His306. Residue Glu307 is part of the active site. Positions 310 and 316 each coordinate Zn(2+). Residues 405–445 (NVIYCSDSCAQKLPCQRGGYTDPRRCGRCRCPDGFTGKLCE) enclose the EGF-like domain. Positions 455–571 (CGGRIELTSS…KGFQAQVRAL (117 aa)) constitute a CUB domain. Asn522 carries an N-linked (GlcNAc...) asparagine glycan.

It depends on Zn(2+) as a cofactor.

It is found in the secreted. With respect to regulation, inhibited by marimastat and tripeptide hydroxamic acids. Functionally, metalloprotease which cleaves the carboxyl terminus of procollagens to mature collagens. Probably involved in cuticular collagen maturation. This Brugia malayi (Filarial nematode worm) protein is Zinc metalloproteinase dpy-31.